The following is a 63-amino-acid chain: Translational regulator CsrA (63 aa).

Belongs to the CsrA/RsmA family. As to quaternary structure, homodimer; the beta-strands of each monomer intercalate to form a hydrophobic core, while the alpha-helices form wings that extend away from the core.

It is found in the cytoplasm. A key translational regulator that binds mRNA to regulate translation initiation and/or mRNA stability. Mediates global changes in gene expression, shifting from rapid growth to stress survival by linking envelope stress, the stringent response and the catabolite repression systems. Usually binds in the 5'-UTR; binding at or near the Shine-Dalgarno sequence prevents ribosome-binding, repressing translation, binding elsewhere in the 5'-UTR can activate translation and/or stabilize the mRNA. Its function is antagonized by small RNA(s). This is Translational regulator CsrA from Haemophilus influenzae (strain PittEE).